Reading from the N-terminus, the 209-residue chain is C-type lectin domain family 6 member A (209 aa).

The Cytoplasmic portion of the chain corresponds to 1–20 (MMQEQQPQSTEKRGWLSLRL). Residues 21 to 41 (WSVAGISIALLSACFIVSCVV) traverse the membrane as a helical; Signal-anchor for type II membrane protein segment. Residues 42-209 (TYHFTYGETG…SICEMNKIYL (168 aa)) lie on the Extracellular side of the membrane. 4 disulfide bridges follow: Cys-66–Cys-78, Cys-79–Cys-90, Cys-107–Cys-202, and Cys-176–Cys-194. The region spanning 86 to 203 (FGSSCYFISS…CETRRNSICE (118 aa)) is the C-type lectin domain. Positions 116, 118, and 122 each coordinate Ca(2+). N-linked (GlcNAc...) asparagine glycosylation is present at Asn-131. Residues Glu-168, Asn-170, and Glu-174 each coordinate Ca(2+). Alpha-D-mannopyranose-binding positions include 168-170 (EPN), Glu-174, Trp-182, 190-191 (ND), and Arg-198. Asn-170 carries N-linked (GlcNAc...) asparagine glycosylation. The Ca(2+) site is built by Asn-190 and Asp-191. Residue Glu-203 participates in Ca(2+) binding.

In terms of assembly, associated with FCER1G. Heterodimer with CLEC4D; this heterodimer forms a pattern recognition receptor (PRR) against fungal infection. As to expression, expressed in lung, spleen, lymph node, leukocytes, bone marrow, tonsils and dendritic cells. Strongly expressed in purified monocytes and weakly in B-cells. In peripheral blood cells, preferentially expressed in plasmacytoids rather than myeloids.

The protein localises to the cell membrane. Its function is as follows. Calcium-dependent lectin that acts as a pattern recognition receptor (PRR) of the innate immune system: specifically recognizes and binds alpha-mannans on C.albicans hypheas. Binding of C.albicans alpha-mannans to this receptor complex leads to phosphorylation of the immunoreceptor tyrosine-based activation motif (ITAM) of FCER1G, triggering activation of SYK, CARD9 and NF-kappa-B, consequently driving maturation of antigen-presenting cells and shaping antigen-specific priming of T-cells toward effector T-helper 1 and T-helper 17 cell subtypes. Recognizes also, in a mannose-dependent manner, allergens from house dust mite and fungi, by promoting cysteinyl leukotriene production. Recognizes soluble elements from the eggs of Shistosoma mansoni altering adaptive immune responses. In Homo sapiens (Human), this protein is C-type lectin domain family 6 member A.